An 89-amino-acid polypeptide reads, in one-letter code: Co-chaperonin GroES (89 aa).

It belongs to the GroES chaperonin family. As to quaternary structure, heptamer of 7 subunits arranged in a ring. Interacts with the chaperonin GroEL.

Its subcellular location is the cytoplasm. Functionally, together with the chaperonin GroEL, plays an essential role in assisting protein folding. The GroEL-GroES system forms a nano-cage that allows encapsulation of the non-native substrate proteins and provides a physical environment optimized to promote and accelerate protein folding. GroES binds to the apical surface of the GroEL ring, thereby capping the opening of the GroEL channel. This chain is Co-chaperonin GroES, found in Parabacteroides distasonis (strain ATCC 8503 / DSM 20701 / CIP 104284 / JCM 5825 / NCTC 11152).